The following is a 690-amino-acid chain: F-box/LRR-repeat protein 5 (690 aa).

Residues 1-159 (MAPFPDEVDV…IKKKVIAQHC (159 aa)) are hemerythrin-like. Fe(3+) contacts are provided by H15, H57, E58, E61, H80, H126, and E130. The 47-residue stretch at 202 to 248 (STGITHLPPEVMLSIFSYLNPQELCRCSQVSTKWSQLAKTGSLWKHL) folds into the F-box domain. LRR repeat units follow at residues 340 to 364 (SSAV…LDLT), 365 to 392 (QTDI…DLSG), 393 to 418 (CEKI…QSGF), 478 to 507 (VWML…CVME), 575 to 606 (TTLP…SLSG), 607 to 634 (CYQI…NLSG), and 635 to 660 (CLTV…YFYY). Residues C661, C675, C685, and C686 each contribute to the [2Fe-2S] cluster site.

In terms of assembly, part of a SCF (SKP1-cullin-F-box) protein ligase complex. Interacts with ACO1/IRP1, IREB2/IRP2; the interaction depends on the [2Fe-2S] cluster. Interacts with DCTN1/p150-glued. The cofactor is [2Fe-2S] cluster. Post-translationally, polybiquitinated upon iron and oxygen depletion, leading to its degradation by the proteasome. Ubiquitination is regulated by the hemerythrin-like region that acts as an oxygen and iron sensor. Undergoes constitutive ubiquitin-dependent degradation at the steady state by HERC2. As to expression, ubiquitously expressed. Highly expressed in early embryogenesis with expression decreasing as the embryo progresses through development (E11 and E15).

The protein localises to the cytoplasm. Its subcellular location is the perinuclear region. It is found in the nucleus. It functions in the pathway protein modification; protein ubiquitination. Its activity is regulated as follows. An iron-sulfur cluster promotes IRP2 polyubiquitination and degradation in response to both iron and oxygen concentrations. Its function is as follows. Component of some SCF (SKP1-cullin-F-box) protein ligase complex that plays a central role in iron homeostasis by promoting the ubiquitination and subsequent degradation of IREB2/IRP2. The C-terminal domain of FBXL5 contains a redox-sensitive [2Fe-2S] cluster that, upon oxidation, promotes binding to IRP2 to effect its oxygen-dependent degradation. Under iron deficiency conditions, the N-terminal hemerythrin-like (Hr) region, which contains a diiron metal center, cannot bind iron and undergoes conformational changes that destabilize the FBXL5 protein and cause its ubiquitination and degradation. When intracellular iron levels start rising, the Hr region is stabilized. Additional increases in iron levels facilitate the assembly and incorporation of a redox active [2Fe-2S] cluster in the C-terminal domain. Only when oxygen level is high enough to maintain the cluster in its oxidized state can FBXL5 recruit IRP2 as a substrate for polyubiquination and degradation. Promotes ubiquitination and subsequent degradation of the dynactin complex component DCTN1. Within the nucleus, promotes the ubiquitination of SNAI1; preventing its interaction with DNA and promoting its degradation. Negatively regulates DNA damage response by mediating the ubiquitin-proteasome degradation of the DNA repair protein NABP2. The sequence is that of F-box/LRR-repeat protein 5 (Fbxl5) from Mus musculus (Mouse).